Consider the following 332-residue polypeptide: uncharacterized protein (332 aa).

The chain crosses the membrane as a helical span at residues 185-205; it reads MVYGYSVFNAFFILLALPNVI.

The protein localises to the host membrane. This is an uncharacterized protein from Sulfolobus islandicus filamentous virus (isolate Iceland/Hveragerdi) (SIFV).